The primary structure comprises 426 residues: Serine--tRNA ligase (426 aa).

A disordered region spans residues 36 to 66 (KRKHLQERTQDLQSQRNTISKEIGQKKAKGE). Residues 46–55 (DLQSQRNTIS) show a composition bias toward polar residues. 233 to 235 (TAE) provides a ligand contact to L-serine. Residue 264–266 (RSE) coordinates ATP. Residue Glu287 coordinates L-serine. 351–354 (EISS) provides a ligand contact to ATP. Ser387 contributes to the L-serine binding site.

This sequence belongs to the class-II aminoacyl-tRNA synthetase family. Type-1 seryl-tRNA synthetase subfamily. Homodimer. The tRNA molecule binds across the dimer.

It is found in the cytoplasm. The enzyme catalyses tRNA(Ser) + L-serine + ATP = L-seryl-tRNA(Ser) + AMP + diphosphate + H(+). It carries out the reaction tRNA(Sec) + L-serine + ATP = L-seryl-tRNA(Sec) + AMP + diphosphate + H(+). Its pathway is aminoacyl-tRNA biosynthesis; selenocysteinyl-tRNA(Sec) biosynthesis; L-seryl-tRNA(Sec) from L-serine and tRNA(Sec): step 1/1. In terms of biological role, catalyzes the attachment of serine to tRNA(Ser). Is also able to aminoacylate tRNA(Sec) with serine, to form the misacylated tRNA L-seryl-tRNA(Sec), which will be further converted into selenocysteinyl-tRNA(Sec). This is Serine--tRNA ligase from Francisella tularensis subsp. holarctica (strain FTNF002-00 / FTA).